A 272-amino-acid polypeptide reads, in one-letter code: Large ribosomal subunit protein uL2cz/uL2cy (272 aa).

Residues 1 to 13 (MHLYKTSTPSTRN) are compositionally biased toward polar residues. Disordered stretches follow at residues 1–27 (MHLY…PRNN) and 222–272 (NPVD…RRSK).

It belongs to the universal ribosomal protein uL2 family. As to quaternary structure, part of the 50S ribosomal subunit.

The protein localises to the plastid. The protein resides in the chloroplast. This is Large ribosomal subunit protein uL2cz/uL2cy (rpl2-A) from Buxus microphylla (Littleleaf boxwood).